The primary structure comprises 274 residues: 4-hydroxy-tetrahydrodipicolinate reductase (274 aa).

Residues 11-16 (GGSGRM) and Glu37 each bind NAD(+). Arg38 is a binding site for NADP(+). NAD(+)-binding positions include 101 to 103 (GTT) and 125 to 128 (APNM). The active-site Proton donor/acceptor is His158. Residue His159 coordinates (S)-2,3,4,5-tetrahydrodipicolinate. The active-site Proton donor is Lys162. A (S)-2,3,4,5-tetrahydrodipicolinate-binding site is contributed by 168 to 169 (GT).

Belongs to the DapB family.

It is found in the cytoplasm. It carries out the reaction (S)-2,3,4,5-tetrahydrodipicolinate + NAD(+) + H2O = (2S,4S)-4-hydroxy-2,3,4,5-tetrahydrodipicolinate + NADH + H(+). The enzyme catalyses (S)-2,3,4,5-tetrahydrodipicolinate + NADP(+) + H2O = (2S,4S)-4-hydroxy-2,3,4,5-tetrahydrodipicolinate + NADPH + H(+). It functions in the pathway amino-acid biosynthesis; L-lysine biosynthesis via DAP pathway; (S)-tetrahydrodipicolinate from L-aspartate: step 4/4. Its function is as follows. Catalyzes the conversion of 4-hydroxy-tetrahydrodipicolinate (HTPA) to tetrahydrodipicolinate. This chain is 4-hydroxy-tetrahydrodipicolinate reductase, found in Shewanella pealeana (strain ATCC 700345 / ANG-SQ1).